Consider the following 924-residue polypeptide: Protein argonaute 4 (924 aa).

Disordered regions lie at residues 1–37 (MDST…PPNV) and 159–185 (TRAN…RRPN). The span at 26 to 37 (LPPPPPVIPPNV) shows a compositional bias: pro residues. Residues 162-173 (NGNGSPNGNESP) are compositionally biased toward low complexity. Residues 292-408 (PVVDFLIANQ…IPLELCALVP (117 aa)) enclose the PAZ domain. Residues 577 to 885 (FILCVLPDKK…AAAQLGTFMK (309 aa)) enclose the Piwi domain. Residues 584–591 (DKKNSDLY) carry the Nuclear localization signal motif.

Belongs to the argonaute family. Ago subfamily. As to quaternary structure, interacts with NRPE1 (via C-terminus). Binding to NRPE1 is required for its function in RdDM. Interacts with turnip crinkle virus (TCV) capsid protein P38; this interaction inhibits probably RNA silencing ability of AGO4. Interacts with SDE3. Binds to RDM3. Binds chromatin at loci subject to transcriptional silencing. Interacts with MBD6. In terms of tissue distribution, expressed in embryos, mature leaves, vascular tissue of the sepals, stamens and stigma, at the tip of the style and siliques.

It is found in the nucleus. Its subcellular location is the nucleolus. It localises to the nucleoplasm. The protein resides in the cajal body. In terms of biological role, together with RDM3, required for transcriptional gene silencing (TGS) by DNA methylation and repressive histone modifications (H3K9me2) of several chromatin loci. Component of the RISC complex that associate with the small interfering RNA (siRNA) pathway involved in direct cytosine methylation at endogenous DNA repeats. Forms a AGO4/NRPE1/siRNA complex in cajal body, facilitating its function in RNA-directed gene silencing of target loci. Required for CpNpG and asymmetric DNA methylation as well as histone H3 'Lys-9' methylation (H3K9me) at SUP and SN1 loci. May be not required for CpG methylation. Required for the production and maintenance of retrotransposon SN1 and Copia and ribosomal 5S 25 nucleotide siRNAs specialized in gene silencing at chromatin level. Involved in de novo methylation of FWA gene and required for the maintenance of RNA-directed DNA methylation (RdDM) triggered by inverted repeat transgenes. Interacts with miRNA miR390 and miR172, targeting respectively TAS3 and AP2 mRNAs, and mediates cleavage of miRNA targets. Associates mainly with small RNAs of 24 nucleotide in length and preferentially recruits small RNAs with a 5' terminal adenosine. Targeted by the turnip yellows virus (TuYV) protein P0 (via F-box-like domain) for probable proteasome degradation and thereby inactivating AGO4 function in RNA silencing. Required for resistance to the bacterial pathogen P.syringae. Works independently of the RdDM pathway in mediating resistance to P.syringae. RdDM is involved in viral genome methylation as an epigenetic defense against geminiviruses. This is Protein argonaute 4 from Arabidopsis thaliana (Mouse-ear cress).